Consider the following 254-residue polypeptide: Peptide methionine sulfoxide reductase A5 (254 aa).

The first 33 residues, 1 to 33 (MAISLKRNRFFIPYTNLVFFFFLCVSLLDKTVS), serve as a signal peptide directing secretion.

It belongs to the MsrA Met sulfoxide reductase family.

It catalyses the reaction L-methionyl-[protein] + [thioredoxin]-disulfide + H2O = L-methionyl-(S)-S-oxide-[protein] + [thioredoxin]-dithiol. The enzyme catalyses [thioredoxin]-disulfide + L-methionine + H2O = L-methionine (S)-S-oxide + [thioredoxin]-dithiol. Its function is as follows. Catalyzes the reduction of methionine sulfoxide (MetSO) to methionine in proteins. Plays a protective role against oxidative stress by restoring activity to proteins that have been inactivated by methionine oxidation. MSRA family specifically reduces the MetSO S-enantiomer. The chain is Peptide methionine sulfoxide reductase A5 (MSRA5) from Arabidopsis thaliana (Mouse-ear cress).